We begin with the raw amino-acid sequence, 521 residues long: Glutamyl-tRNA(Gln) amidotransferase subunit B, mitochondrial (521 aa).

The N-terminal 22 residues, 1 to 22 (MIALLRWGIARPSAPLRWSRCF), are a transit peptide targeting the mitochondrion.

This sequence belongs to the GatB/GatE family. GatB subfamily. Subunit of the heterotrimeric GatCAB amidotransferase (AdT) complex, composed of A, B and C subunits.

The protein resides in the mitochondrion. It carries out the reaction L-glutamyl-tRNA(Gln) + L-glutamine + ATP + H2O = L-glutaminyl-tRNA(Gln) + L-glutamate + ADP + phosphate + H(+). Allows the formation of correctly charged Gln-tRNA(Gln) through the transamidation of misacylated Glu-tRNA(Gln) in the mitochondria. The reaction takes place in the presence of glutamine and ATP through an activated gamma-phospho-Glu-tRNA(Gln). This chain is Glutamyl-tRNA(Gln) amidotransferase subunit B, mitochondrial, found in Cryptococcus neoformans var. neoformans serotype D (strain JEC21 / ATCC MYA-565) (Filobasidiella neoformans).